A 110-amino-acid polypeptide reads, in one-letter code: Phosphoribosyl-AMP cyclohydrolase (110 aa).

Aspartate 74 contacts Mg(2+). Residue cysteine 75 coordinates Zn(2+). 2 residues coordinate Mg(2+): aspartate 76 and aspartate 78. Positions 91 and 98 each coordinate Zn(2+).

The protein belongs to the PRA-CH family. Homodimer. Requires Mg(2+) as cofactor. Zn(2+) serves as cofactor.

It localises to the cytoplasm. It catalyses the reaction 1-(5-phospho-beta-D-ribosyl)-5'-AMP + H2O = 1-(5-phospho-beta-D-ribosyl)-5-[(5-phospho-beta-D-ribosylamino)methylideneamino]imidazole-4-carboxamide. The protein operates within amino-acid biosynthesis; L-histidine biosynthesis; L-histidine from 5-phospho-alpha-D-ribose 1-diphosphate: step 3/9. Its function is as follows. Catalyzes the hydrolysis of the adenine ring of phosphoribosyl-AMP. The chain is Phosphoribosyl-AMP cyclohydrolase from Lacticaseibacillus paracasei (strain ATCC 334 / BCRC 17002 / CCUG 31169 / CIP 107868 / KCTC 3260 / NRRL B-441) (Lactobacillus paracasei).